A 1078-amino-acid polypeptide reads, in one-letter code: Carbamoyl phosphate synthase large chain (1078 aa).

Residues 1-401 (MARQPLVSSV…ALQKAVRGLE (401 aa)) are carboxyphosphate synthetic domain. ATP is bound by residues R129, R169, G175, G176, R208, L210, E215, G241, V242, H243, Q284, and E298. The 195-residue stretch at 133 to 327 (KELLLEIGEP…IARIAAKLAI (195 aa)) folds into the ATP-grasp 1 domain. Q284, E298, and N300 together coordinate Mg(2+). Mn(2+) contacts are provided by Q284, E298, and N300. The segment at 402–546 (TDQTDLTWED…YATYEDENEA (145 aa)) is oligomerization domain. The tract at residues 547–935 (PPLDSPKAVV…ALAKAFLAAG (389 aa)) is carbamoyl phosphate synthetic domain. Residues 677–867 (ERFLHELGIP…MVDVATQILL (191 aa)) enclose the ATP-grasp 2 domain. Positions 713, 752, 754, 758, 783, 784, 785, 786, 826, and 838 each coordinate ATP. Positions 826, 838, and 840 each coordinate Mg(2+). Positions 826, 838, and 840 each coordinate Mn(2+). In terms of domain architecture, MGS-like spans 936–1078 (LAIERGAPVL…AYRTREAVLA (143 aa)). The tract at residues 936 to 1078 (LAIERGAPVL…AYRTREAVLA (143 aa)) is allosteric domain.

Belongs to the CarB family. In terms of assembly, composed of two chains; the small (or glutamine) chain promotes the hydrolysis of glutamine to ammonia, which is used by the large (or ammonia) chain to synthesize carbamoyl phosphate. Tetramer of heterodimers (alpha,beta)4. Mg(2+) is required as a cofactor. It depends on Mn(2+) as a cofactor.

The catalysed reaction is hydrogencarbonate + L-glutamine + 2 ATP + H2O = carbamoyl phosphate + L-glutamate + 2 ADP + phosphate + 2 H(+). It catalyses the reaction hydrogencarbonate + NH4(+) + 2 ATP = carbamoyl phosphate + 2 ADP + phosphate + 2 H(+). The protein operates within amino-acid biosynthesis; L-arginine biosynthesis; carbamoyl phosphate from bicarbonate: step 1/1. Its pathway is pyrimidine metabolism; UMP biosynthesis via de novo pathway; (S)-dihydroorotate from bicarbonate: step 1/3. In terms of biological role, large subunit of the glutamine-dependent carbamoyl phosphate synthetase (CPSase). CPSase catalyzes the formation of carbamoyl phosphate from the ammonia moiety of glutamine, carbonate, and phosphate donated by ATP, constituting the first step of 2 biosynthetic pathways, one leading to arginine and/or urea and the other to pyrimidine nucleotides. The large subunit (synthetase) binds the substrates ammonia (free or transferred from glutamine from the small subunit), hydrogencarbonate and ATP and carries out an ATP-coupled ligase reaction, activating hydrogencarbonate by forming carboxy phosphate which reacts with ammonia to form carbamoyl phosphate. In Thermomicrobium roseum (strain ATCC 27502 / DSM 5159 / P-2), this protein is Carbamoyl phosphate synthase large chain.